The following is a 418-amino-acid chain: uncharacterized protein (418 aa).

This is an uncharacterized protein from Ictalurid herpesvirus 1 (strain Auburn) (IcHV-1).